The chain runs to 388 residues: Mannitol-1-phosphate 5-dehydrogenase (388 aa).

4–15 (AVHFGAGNIGRG) is an NAD(+) binding site.

This sequence belongs to the mannitol dehydrogenase family.

It carries out the reaction D-mannitol 1-phosphate + NAD(+) = beta-D-fructose 6-phosphate + NADH + H(+). This chain is Mannitol-1-phosphate 5-dehydrogenase, found in Lactococcus lactis subsp. cremoris (strain MG1363).